Reading from the N-terminus, the 198-residue chain is dITP/XTP pyrophosphatase (198 aa).

Residue 8–13 coordinates substrate; sequence TKNKGK. Asp69 serves as the catalytic Proton acceptor. Mg(2+) is bound at residue Asp69. Substrate contacts are provided by residues Ser70, 152-155, Lys175, and 180-181; these read FGYD and HR.

The protein belongs to the HAM1 NTPase family. In terms of assembly, homodimer. It depends on Mg(2+) as a cofactor.

It carries out the reaction XTP + H2O = XMP + diphosphate + H(+). The catalysed reaction is dITP + H2O = dIMP + diphosphate + H(+). It catalyses the reaction ITP + H2O = IMP + diphosphate + H(+). Its function is as follows. Pyrophosphatase that catalyzes the hydrolysis of nucleoside triphosphates to their monophosphate derivatives, with a high preference for the non-canonical purine nucleotides XTP (xanthosine triphosphate), dITP (deoxyinosine triphosphate) and ITP. Seems to function as a house-cleaning enzyme that removes non-canonical purine nucleotides from the nucleotide pool, thus preventing their incorporation into DNA/RNA and avoiding chromosomal lesions. This chain is dITP/XTP pyrophosphatase, found in Shouchella clausii (strain KSM-K16) (Alkalihalobacillus clausii).